Here is a 328-residue protein sequence, read N- to C-terminus: Stress response kinase A (328 aa).

The Proton acceptor role is filled by D201. Residues N206 and D217 each coordinate Mg(2+). D217 is an active-site residue.

Belongs to the SrkA/RdoA protein kinase family. As to quaternary structure, monomer. Requires Mg(2+) as cofactor.

It localises to the cytoplasm. The catalysed reaction is L-seryl-[protein] + ATP = O-phospho-L-seryl-[protein] + ADP + H(+). The enzyme catalyses L-threonyl-[protein] + ATP = O-phospho-L-threonyl-[protein] + ADP + H(+). A protein kinase that phosphorylates Ser and Thr residues. Probably acts to suppress the effects of stress linked to accumulation of reactive oxygen species. Probably involved in the extracytoplasmic stress response. This is Stress response kinase A from Escherichia coli O157:H7.